A 122-amino-acid polypeptide reads, in one-letter code: Large ribosomal subunit protein uL14 (122 aa).

Belongs to the universal ribosomal protein uL14 family. In terms of assembly, part of the 50S ribosomal subunit. Forms a cluster with proteins L3 and L19. In the 70S ribosome, L14 and L19 interact and together make contacts with the 16S rRNA in bridges B5 and B8.

In terms of biological role, binds to 23S rRNA. Forms part of two intersubunit bridges in the 70S ribosome. The protein is Large ribosomal subunit protein uL14 of Lawsonia intracellularis (strain PHE/MN1-00).